Consider the following 105-residue polypeptide: Small ribosomal subunit protein uS17 (105 aa).

This sequence belongs to the universal ribosomal protein uS17 family. Part of the 30S ribosomal subunit.

One of the primary rRNA binding proteins, it binds specifically to the 5'-end of 16S ribosomal RNA. The chain is Small ribosomal subunit protein uS17 from Thermus thermophilus (strain ATCC BAA-163 / DSM 7039 / HB27).